A 147-amino-acid chain; its full sequence is Hemoglobin subunit epsilon (147 aa).

Residues 3-147 (HFTAEEKAAV…VAIALAHKYH (145 aa)) form the Globin domain. Ser14 and Ser51 each carry phosphoserine. The heme b site is built by His64 and His93.

It belongs to the globin family. As to quaternary structure, heterotetramer of two alpha chains and two epsilon chains in early embryonic hemoglobin Gower-2; two zeta chains and two epsilon chains in early embryonic hemoglobin Gower-1. Red blood cells.

In terms of biological role, the epsilon chain is a beta-type chain of early mammalian embryonic hemoglobin. The chain is Hemoglobin subunit epsilon (HBE1) from Pongo pygmaeus (Bornean orangutan).